A 329-amino-acid chain; its full sequence is Beta-ketoacyl-[acyl-carrier-protein] synthase III (329 aa).

Catalysis depends on residues Cys-113 and His-255. An ACP-binding region spans residues Gln-256–Arg-260. The active site involves Asn-285.

It belongs to the thiolase-like superfamily. FabH family. As to quaternary structure, homodimer.

The protein resides in the cytoplasm. It carries out the reaction malonyl-[ACP] + acetyl-CoA + H(+) = 3-oxobutanoyl-[ACP] + CO2 + CoA. It participates in lipid metabolism; fatty acid biosynthesis. In terms of biological role, catalyzes the condensation reaction of fatty acid synthesis by the addition to an acyl acceptor of two carbons from malonyl-ACP. Catalyzes the first condensation reaction which initiates fatty acid synthesis and may therefore play a role in governing the total rate of fatty acid production. Possesses both acetoacetyl-ACP synthase and acetyl transacylase activities. Its substrate specificity determines the biosynthesis of branched-chain and/or straight-chain of fatty acids. In Chlorobium phaeobacteroides (strain DSM 266 / SMG 266 / 2430), this protein is Beta-ketoacyl-[acyl-carrier-protein] synthase III.